Here is a 365-residue protein sequence, read N- to C-terminus: Validamycin A dioxygenase (365 aa).

In terms of domain architecture, Fe2OG dioxygenase spans 174–284 (HATWTQSVNW…LVSLVYFFDA (111 aa)). Residues histidine 203, aspartate 205, and histidine 261 each contribute to the Fe cation site. The interval 331–365 (GELSLSRPGSADSPGSSPADDHPSRPGRHPAQGPQ) is disordered. A compositionally biased stretch (low complexity) spans 336 to 348 (SRPGSADSPGSSP).

Belongs to the iron/ascorbate-dependent oxidoreductase family. The cofactor is Fe(2+).

The catalysed reaction is validamycin A + 2-oxoglutarate + O2 = validamycin B + succinate + CO2 + H(+). It catalyses the reaction validoxylamine A + 2-oxoglutarate + O2 = validoxylamine B + succinate + CO2 + H(+). It functions in the pathway antibiotic biosynthesis. Functionally, involved in the biosynthesis of validamycin B, a component of the antifungal and antibiotic validamycin complex used as a crop protectant. Catalyzes the regioselective hydroxylation of validamycin A (4-O-beta-D-glucopyranosyl-validoxylamine A) at the C-6 position to yield validamycin B. To a lesser extent, also able to convert validoxylamine A to its hydroxylated derivative. The chain is Validamycin A dioxygenase from Streptomyces hygroscopicus subsp. limoneus.